The primary structure comprises 569 residues: Probable protein phosphatase 2C BIPP2C1 (569 aa).

Disordered regions lie at residues 166-212 (GSSN…SSKV) and 251-279 (SLDD…GSSI). Residues 174–183 (SEVGVESECG) show a composition bias toward low complexity. The PPM-type phosphatase domain occupies 329-564 (AAMLPHPSKV…DDVTVVVSVV (236 aa)). Residues Asp358, Gly359, Asp488, and Asp555 each coordinate Mn(2+).

Belongs to the PP2C family. Mg(2+) is required as a cofactor. The cofactor is Mn(2+).

The catalysed reaction is O-phospho-L-seryl-[protein] + H2O = L-seryl-[protein] + phosphate. It carries out the reaction O-phospho-L-threonyl-[protein] + H2O = L-threonyl-[protein] + phosphate. May play a role in responses to biotic and abiotic stresses. The chain is Probable protein phosphatase 2C BIPP2C1 (BIPP2C1) from Oryza sativa subsp. indica (Rice).